The chain runs to 138 residues: Hexon-interlacing protein (138 aa).

Residues 100–127 (LLVLLAQLEALTQRLGELSKQVAQLREQ) are a coiled coil.

Belongs to the adenoviridae hexon-interlacing protein family. As to quaternary structure, homotrimer. Interacts with hexon protein; this interaction tethers the hexons together. Self-interacts with adjacent proteins. Interacts with kinesin light chain KLC1; this interaction leads to capsid disruption at the nuclear pore complex during virus entry into host cell.

It localises to the virion. The protein localises to the host nucleus. Functionally, structural component of the virion that acts as a cement protein on the capsid exterior and forms triskelion structures consisting of three molecules that stabilize three hexon trimers at the center of each icosahedral facet and fixes the peripentonal hexons. Dispensable for assembly. During virus entry, recruits the anterograde motor kinesin-1 to the capsid docked at the nuclear pore complex thereby subjecting the docked capsid to a pulling force. The resulting tension leads to capsid disruption, dispersion of capsid fragments toward cell periphery and eventually viral DNA entry into the host nucleus. This Human adenovirus B serotype 7 (HAdV-7) protein is Hexon-interlacing protein.